Reading from the N-terminus, the 42-residue chain is Photosystem I reaction center subunit IX (42 aa).

The helical transmembrane segment at 7-27 (YLSTAPVLATLWFGFLAGLLI) threads the bilayer.

Belongs to the PsaJ family.

Its subcellular location is the plastid. It is found in the chloroplast thylakoid membrane. In terms of biological role, may help in the organization of the PsaE and PsaF subunits. The polypeptide is Photosystem I reaction center subunit IX (Huperzia lucidula (Shining clubmoss)).